Here is a 54-residue protein sequence, read N- to C-terminus: Ribulose bisphosphate carboxylase large chain (54 aa).

Residues 1–2 (MS) constitute a propeptide that is removed on maturation. Residue proline 3 is modified to N-acetylproline. Position 14 is an N6,N6,N6-trimethyllysine (lysine 14).

The protein belongs to the RuBisCO large chain family. Type I subfamily. As to quaternary structure, heterohexadecamer of 8 large chains and 8 small chains.

The protein localises to the plastid. It is found in the chloroplast. The catalysed reaction is 2 (2R)-3-phosphoglycerate + 2 H(+) = D-ribulose 1,5-bisphosphate + CO2 + H2O. It catalyses the reaction D-ribulose 1,5-bisphosphate + O2 = 2-phosphoglycolate + (2R)-3-phosphoglycerate + 2 H(+). In terms of biological role, ruBisCO catalyzes two reactions: the carboxylation of D-ribulose 1,5-bisphosphate, the primary event in carbon dioxide fixation, as well as the oxidative fragmentation of the pentose substrate in the photorespiration process. Both reactions occur simultaneously and in competition at the same active site. This Ilex aquifolium (English holly) protein is Ribulose bisphosphate carboxylase large chain (rbcL).